The following is a 379-amino-acid chain: ORC1-type DNA replication protein 2 (379 aa).

ATP contacts are provided by residues 69–73 (TGKTT), Y211, and R223.

Belongs to the CDC6/cdc18 family. As to quaternary structure, interacts with MCM. Post-translationally, autophosphorylated on a serine. Phosphorylation is inhibited by binding to MCM. Both single-stranded DNA and double-stranded DNA inhibit the phosphorylation reaction.

Its function is as follows. Involved in regulation of DNA replication. Dissociates the MCM complex and inhibits the MCM helicase activity, suggesting that it may function as a helicase loader. Binds to both specific and random double-stranded or single-stranded DNA. The chain is ORC1-type DNA replication protein 2 (cdc6-2) from Methanothermobacter thermautotrophicus (strain ATCC 29096 / DSM 1053 / JCM 10044 / NBRC 100330 / Delta H) (Methanobacterium thermoautotrophicum).